The following is an 862-amino-acid chain: Glucans biosynthesis glucosyltransferase H (862 aa).

The interval Met-1–Pro-25 is disordered. Polar residues predominate over residues Ser-7–Pro-25. Transmembrane regions (helical) follow at residues Arg-188 to Leu-210, Gly-545 to Ala-567, Ala-597 to Ala-619, Gly-626 to Val-648, and Phe-708 to Ser-730.

The protein belongs to the glycosyltransferase 2 family. OpgH subfamily.

It localises to the cell inner membrane. It functions in the pathway glycan metabolism; osmoregulated periplasmic glucan (OPG) biosynthesis. Functionally, involved in the biosynthesis of osmoregulated periplasmic glucans (OPGs). This is Glucans biosynthesis glucosyltransferase H from Ralstonia nicotianae (strain ATCC BAA-1114 / GMI1000) (Ralstonia solanacearum).